A 400-amino-acid chain; its full sequence is Probable vacuolar protease A (400 aa).

The signal sequence occupies residues 1–18 (MKGSLLLAGATLLGCTSA). Positions 19-72 (KLHSLKLKKVSLKEQLEHADIDVQIKSLGQKYMGIRPEQHEQQMFKEQTPIEAE) are cleaved as a propeptide — activation peptide. The Peptidase A1 domain maps to 87 to 397 (YFSEISIGTP…DLGKGTVGLA (311 aa)). D105 is a catalytic residue. Residues C118 and C123 are joined by a disulfide bond. N140 carries an N-linked (GlcNAc...) asparagine glycan. Residue D289 is part of the active site. An intrachain disulfide couples C323 to C356. Residue N340 is glycosylated (N-linked (GlcNAc...) asparagine).

It belongs to the peptidase A1 family.

The protein resides in the vacuole lumen. It localises to the secreted. It catalyses the reaction Hydrolysis of proteins with broad specificity for peptide bonds. Cleaves -Leu-Leu-|-Val-Tyr- bond in a synthetic substrate. Does not act on esters of Tyr or Arg.. Its function is as follows. Vacuolar aspartic endopeptidase which is probably also secreted and contributes to virulence. The polypeptide is Probable vacuolar protease A (PEP2) (Trichophyton verrucosum (strain HKI 0517)).